Consider the following 568-residue polypeptide: 2-succinyl-5-enolpyruvyl-6-hydroxy-3-cyclohexene-1-carboxylate synthase (568 aa).

The protein belongs to the TPP enzyme family. MenD subfamily. Homodimer. Requires Mg(2+) as cofactor. It depends on Mn(2+) as a cofactor. The cofactor is thiamine diphosphate.

The enzyme catalyses isochorismate + 2-oxoglutarate + H(+) = 5-enolpyruvoyl-6-hydroxy-2-succinyl-cyclohex-3-ene-1-carboxylate + CO2. It participates in quinol/quinone metabolism; 1,4-dihydroxy-2-naphthoate biosynthesis; 1,4-dihydroxy-2-naphthoate from chorismate: step 2/7. The protein operates within quinol/quinone metabolism; menaquinone biosynthesis. Catalyzes the thiamine diphosphate-dependent decarboxylation of 2-oxoglutarate and the subsequent addition of the resulting succinic semialdehyde-thiamine pyrophosphate anion to isochorismate to yield 2-succinyl-5-enolpyruvyl-6-hydroxy-3-cyclohexene-1-carboxylate (SEPHCHC). This chain is 2-succinyl-5-enolpyruvyl-6-hydroxy-3-cyclohexene-1-carboxylate synthase, found in Mannheimia succiniciproducens (strain KCTC 0769BP / MBEL55E).